The sequence spans 745 residues: F-box only protein 30 (745 aa).

A TRAF-type zinc finger spans residues 48 to 109 (EHRLLCPFER…SYADRKSYEN (62 aa)). Disordered regions lie at residues 211–231 (NTSV…LEDQ) and 305–324 (GDSK…SDGT). Over residues 222 to 231 (QNARESLEDQ) the composition is skewed to basic and acidic residues. The span at 305–314 (GDSKQSNLTN) shows a compositional bias: polar residues. The F-box domain maps to 610 to 658 (NDHLSSLPFEVLQHIAGFLDGFSLCQLSCVSKLMRDVCGSLLQSRGMVI).

As to quaternary structure, part of a SCF (SKP1-cullin-F-box) protein ligase complex. Interacts with SKP1, CUL1 and RBX1/ROC1. In terms of processing, auto-ubiquitinated. May be neddylated. Neddylation may be required for E3 ligase activity.

It participates in protein modification; protein ubiquitination. Substrate-recognition component of the SCF (SKP1-CUL1-F-box protein)-type E3 ubiquitin ligase complex. Required for muscle atrophy following denervation. The sequence is that of F-box only protein 30 (FBXO30) from Homo sapiens (Human).